The chain runs to 198 residues: Ribonuclease HII (198 aa).

One can recognise an RNase H type-2 domain in the interval 9-198 (ITVAGADEAG…LLPDQLKIDF (190 aa)). A divalent metal cation contacts are provided by aspartate 15, glutamate 16, and aspartate 107.

This sequence belongs to the RNase HII family. The cofactor is Mn(2+). It depends on Mg(2+) as a cofactor.

The protein resides in the cytoplasm. The enzyme catalyses Endonucleolytic cleavage to 5'-phosphomonoester.. In terms of biological role, endonuclease that specifically degrades the RNA of RNA-DNA hybrids. This is Ribonuclease HII from Christiangramia forsetii (strain DSM 17595 / CGMCC 1.15422 / KT0803) (Gramella forsetii).